The chain runs to 1985 residues: MAPSHNVVLLVDTAESSDKSRLRRVSLRLLNFLACRAGLGQVRWSYRFLNSSGGRCRPPRRSDLRELGPRGWEEFEDELEACWERARNCRPSSTQSSRAQLLQTALMETLADFQWDRPDITSPTKPTLLRSRRGRIVAADEPLKDDSPDNFINPHSRNSIFLLSSCPHSGTELGQFAATSGDFSTQKVMDKLLPKSLQKIVSSKRVRVYWLDTSDWTQFGSSSDHSGYWTMVELMHQVEGRILPSESILGSSCQKAKTLPSFSVPPINIPFESVLNYLIFSEPDYQLWFPRRDGILFLTGKDGTKQLDCAVSLEPVSMIQKLSTSLMTIELKGTMQNCNLPLAGLRVETWLLHNSDCVQLQKLTKELMLKELHMIATVTLEDDVLPRTGILSPLSETAAVLNVICSERTLGLDNLHVQGSVHETDKETFSDLPDIVMSVLNHVYSSEDNTLAPDFPVPEWIKQELSQSSRWTSSVTARWYPLSGVSGASCNLMESFRLINAASSNCDEHLKFDQELTNYLSEFYQKKSVDDAGLGVHRENQKKSGLPRTPVRQKMKTLPRALQMLNAARLNVKAQKADSTLPVPNEKNSQMKRRSSGKQDNKPKQLKPTEFQSEDGLISYIKENYEEAVSLVDHSTMTWARDTLTTIKSYLKSIGSEQIETEAIDKVKLLFKTSKVIRQNYRNNQDKEVKLKECQLQVFLRLEMFVQCPVIQMDSDELELIIEEITDILRIVSLTEDPLFLTKFLEVDVLTQYIASVPKILADIYFSLGTQIPEVLVLVLPSDGDDSIMHEEKSVKSQPSTSRVPSVAPIGAETDQLEDLRTRSAKKRRSTALARHRSVAESSQSFRQIEVPKRQPNKENVQSNAVVVLEKLKLPLPAQPQKDAEAKVRRNLFIQETRSPSKRCSKMPRSQSVSAVESLKRKRSKSHDGSKDHHKLLTKKVSETPVHKQTANRLLLRQIKGRPSESNSNISIVEESPEKEIRDIDLRRSPRIKQLSLTRRNSSSFYASQPKSRNLERVNSATQLQQSRERPGSCLISEVKTPKRLLFGEVLGMISPPTTKRSRRILDMVNPVYKTPGKTPRKTPSKNIPNFEDQSGNMLVKSPCTPYTPRTPSRTPKRLKTPSKGSTERKKAAKNLGKLFSPSKPEEKSPLKLWGRRSERLAQMTPGKDGSPYKQSVCQTLMEVKTPQKLQRLESKDFRTPSRTPTRSNNTTPAKQSMQISNTPRKSDLKHPQEHESRGPSGYILWTPQKRILASVPHTPILQTPQKPISASVPRTPVCRTPQKAILSSVPSTPVCQTPNKAILTSVSRTPVYQTPQKAILASVMSTPVYQTPQKPVLASVPTTPILKTPQRSALASVSHTPSPKKYIMKELTVAITRMRECTPEKVLGSNLSSSATPSSALKSFCSEKTTSVCQTPKKSSIALLKPCDSLEFSGAPERLMDSLCSNKDSTKAETACTVPSQISTQMQNVINAGECTDSLSQTSVSSPSIPFTDKSLSPDLKDALSDVTSSKAEGVTIVSEKLDSSSMDSQEATDSFINSSQTEESIDISEARVVSTEASELKMKVLITRKPSGSGVSYLPTTPKCLGNVCSTSTYGLRCTPDRRQREAAARLGTPEIPAKFSTPKSHCKMIPQSIYEVELEMQESGLPKLRFKRTDSNSTIDMDVNKTPKISRKRKGDESPFNEKWCSKHAVRTEPACVSPSCVRTSHYTPGKSGIQTFICQSYTPNRCLSAAASPSQSDAGVPWTPSPKEKLSTDVINSWPRKKKASALCTNLLKCDKIPEYAEEDGGDFELEGVSKLLEKSPVIEQQSKVDGGTFGLRSRKRVFSLVSPTKETENPVKRVCTFNRHEDSSTATHRHQTKEEMEIFSSDQSRSSYLSSSQQSICDDVFNMSDFTPPSKVPKNPLSACGLLTLTQSPLLYKGKTPSSKRKEKIQDVFSDGDSDHGTPTLKRPTNPAAVSDDSPFRKVNPLRSISKTYSRKKLIT.

8 disordered regions span residues 574-609 (AQKA…LKPT), 791-858 (EEKS…QPNK), 894-974 (IQET…SIVE), 999-1033 (RRNS…RPGS), 1072-1156 (VYKT…LWGR), 1184-1243 (VKTP…PSGY), 1849-1875 (HEDS…QSRS), and 1938-1966 (FSDG…SPFR). A compositionally biased stretch (basic residues) spans 823–837 (RSAKKRRSTALARHR). Low complexity predominate over residues 964-974 (SESNSNISIVE). Composition is skewed to polar residues over residues 999 to 1026 (RRNS…QLQQ) and 1085 to 1097 (SKNI…QSGN). Over residues 1105-1114 (TPYTPRTPSR) the composition is skewed to low complexity. Basic and acidic residues-rich tracts occupy residues 1144–1156 (KPEE…LWGR) and 1191–1200 (QRLESKDFRT). The span at 1201–1224 (PSRTPTRSNNTTPAKQSMQISNTP) shows a compositional bias: polar residues. The span at 1225-1238 (RKSDLKHPQEHESR) shows a compositional bias: basic and acidic residues.

Belongs to the treslin family. Interacts with topbp1 (via BRCT domains); interaction is cdk2-dependent. Component of the replisome complex. Post-translationally, phosphorylated during interphase. Cdk2 promotes both phosphorylation and formation of a ticrr-topbp1 complex.

Its subcellular location is the nucleus. Functionally, regulator of DNA replication and S/M and G2/M checkpoints. Regulates the triggering of DNA replication initiation via its interaction with topbp1 by participating in cdk2-mediated loading of cdc45l onto replication origins. Required for the transition from pre-replication complex (pre-RC) to pre-initiation complex (pre-IC). Required to prevent mitotic entry after treatment with ionizing radiation. The protein is Treslin (ticrr) of Xenopus laevis (African clawed frog).